A 197-amino-acid chain; its full sequence is Imidazoleglycerol-phosphate dehydratase (197 aa).

This sequence belongs to the imidazoleglycerol-phosphate dehydratase family.

The protein localises to the cytoplasm. The enzyme catalyses D-erythro-1-(imidazol-4-yl)glycerol 3-phosphate = 3-(imidazol-4-yl)-2-oxopropyl phosphate + H2O. It participates in amino-acid biosynthesis; L-histidine biosynthesis; L-histidine from 5-phospho-alpha-D-ribose 1-diphosphate: step 6/9. The protein is Imidazoleglycerol-phosphate dehydratase of Halorhodospira halophila (strain DSM 244 / SL1) (Ectothiorhodospira halophila (strain DSM 244 / SL1)).